Consider the following 726-residue polypeptide: tRNA endonuclease ANKZF1 (726 aa).

The segment at 40 to 61 is disordered; sequence LARAPRTSCSGSGERESPERKL. Positions 52 to 61 are enriched in basic and acidic residues; the sequence is GERESPERKL. The C2H2-type zinc-finger motif lies at 72–96; that stretch reads LFCSTCDQTFQNHQEQREHYKLDWH. Low complexity predominate over residues 120-130; sequence STGDLSSISGS. Positions 120–141 are disordered; it reads STGDLSSISGSEDSDSASEEDL. A compositionally biased stretch (acidic residues) spans 131-141; it reads EDSDSASEEDL. Residues 203-346 form the VLRF1 domain; it reads GPRDCVVLMA…QRVLHKLTTL (144 aa). Gln-246 is a catalytic residue. Phosphoserine is present on residues Ser-258, Ser-361, and Ser-398. 2 disordered regions span residues 387 to 409 and 436 to 474; these read DEKE…EGED and RRRR…SSQA. Residues 436 to 445 show a composition bias toward basic residues; the sequence is RRRRKRNKKE. Over residues 457-473 the composition is skewed to low complexity; that stretch reads TLLQQTQEEEPSTQSSQ. Residues 493–526 form an ANK 1 repeat; the sequence is ELWNALLAACRAGDVGVLKLQLAPSPADPRVLSL. Residue Ser-533 is modified to Phosphoserine. One copy of the ANK 2 repeat lies at 534–563; it reads GGFTLLHAAAAAGRGSVVRLLLEAGADPTV. The disordered stretch occupies residues 588-656; the sequence is MEKNPDAYDY…RRFAALSDRE (69 aa). Residue Thr-607 is modified to Phosphothreonine. The stretch at 609–659 forms a coiled coil; that stretch reads EMEARQATRKREQKAARRQREEQQQRQQEQEEREREEQRRFAALSDREKRA. Basic and acidic residues predominate over residues 610–656; that stretch reads MEARQATRKREQKAARRQREEQQQRQQEQEEREREEQRRFAALSDRE. Residues 654–666 form a VCP/p97-interacting motif (VIM) region; that stretch reads DREKRALAAERRL. Phosphoserine is present on residues Ser-675 and Ser-680.

Belongs to the ANKZF1/VMS1 family. Interacts (via VIM motif) with VCP.

The protein localises to the cytoplasm. Its function is as follows. Endonuclease that cleaves polypeptidyl-tRNAs downstream of the ribosome-associated quality control (RQC) pathway to release incompletely synthesized polypeptides for degradation. The RQC pathway disassembles aberrantly stalled translation complexes to recycle or degrade the constituent parts. ANKZF1 acts downstream disassembly of stalled ribosomes and specifically cleaves off the terminal 3'-CCA nucleotides universal to all tRNAs from polypeptidyl-tRNAs, releasing (1) ubiquitinated polypeptides from 60S ribosomal subunit for degradation and (2) cleaved tRNAs. ANKZF1-cleaved tRNAs are then repaired and recycled by ELAC1 and TRNT1. Also plays a role in the cellular response to hydrogen peroxide and in the maintenance of mitochondrial integrity under conditions of cellular stress. The polypeptide is tRNA endonuclease ANKZF1 (Homo sapiens (Human)).